Consider the following 379-residue polypeptide: MAKRDYYEVLGISKDASKDEIKKAYRKLSKKYHPDINKEEGADEKFKEISEAYEVLSDDNKRASYDQFGHDGPQGFGGQGFNGSDFGGFSGFGGGGFEDIFSSFFGGGRQRDPNAPQKGDDLQYTMTLTFEEAVFGTTKEISIRKDVTCETCHGDGAKPGTSKKTCSYCNGAGHVAVEQNTILGRVRTEQVCPKCNGSGQEFEEACPTCHGKGTENKTVKLEVKVPEGVDNEQQIRLAGEGSPGVNGGPAGDLYVVFRVKPSETFKRDGDDIYYKLNVSFPQAALGDEIKIPTLNNEVMLTIPAGTQTGKQFRLKEKGIKNVHGYGYGDLYVDIKVVTPTKLTDRQKELMKEFAQLNGEEINEQPSNFKDRAKRFFKGE.

The J domain occupies 5-69 (DYYEVLGISK…NKRASYDQFG (65 aa)). The CR-type zinc finger occupies 136-218 (GTTKEISIRK…CHGKGTENKT (83 aa)). C149, C152, C166, C169, C192, C195, C206, and C209 together coordinate Zn(2+). CXXCXGXG motif repeat units follow at residues 149–156 (CETCHGDG), 166–173 (CSYCNGAG), 192–199 (CPKCNGSG), and 206–213 (CPTCHGKG).

It belongs to the DnaJ family. Homodimer. The cofactor is Zn(2+).

The protein resides in the cytoplasm. Functionally, participates actively in the response to hyperosmotic and heat shock by preventing the aggregation of stress-denatured proteins and by disaggregating proteins, also in an autonomous, DnaK-independent fashion. Unfolded proteins bind initially to DnaJ; upon interaction with the DnaJ-bound protein, DnaK hydrolyzes its bound ATP, resulting in the formation of a stable complex. GrpE releases ADP from DnaK; ATP binding to DnaK triggers the release of the substrate protein, thus completing the reaction cycle. Several rounds of ATP-dependent interactions between DnaJ, DnaK and GrpE are required for fully efficient folding. Also involved, together with DnaK and GrpE, in the DNA replication of plasmids through activation of initiation proteins. This chain is Chaperone protein DnaJ, found in Staphylococcus aureus (strain USA300 / TCH1516).